A 237-amino-acid polypeptide reads, in one-letter code: Lectin alpha chain (237 aa).

Mn(2+) contacts are provided by Glu-8 and Asp-10. 4 residues coordinate Ca(2+): Asp-10, Tyr-12, Asn-14, and Asp-19. Residue Tyr-12 coordinates a carbohydrate. 2 residues coordinate Mn(2+): Asp-19 and His-24. 99–100 (LY) contributes to the a carbohydrate binding site. Residue Asp-208 participates in Ca(2+) binding. Residue Arg-228 participates in a carbohydrate binding.

The protein belongs to the leguminous lectin family. In terms of assembly, homotetramer. The beta and gamma chains are produced by partial proteolytic processing of the lectin alpha chain by an asparaginyl endopeptidase.

It is found in the vacuole. The protein resides in the aleurone grain. Its function is as follows. D-mannose/D-glucose-binding lectin with hemagglutinating activity towards rabbit and human erythrocytes. In rats, elicits an acute inflammatory response by inducing neutrophil migration and induces dose-dependent paw edema. The polypeptide is Lectin alpha chain (Macropsychanthus wilsonii (Wilson's clusterpea)).